Reading from the N-terminus, the 117-residue chain is Large ribosomal subunit protein bL17 (117 aa).

The protein belongs to the bacterial ribosomal protein bL17 family. As to quaternary structure, part of the 50S ribosomal subunit. Contacts protein L32.

This is Large ribosomal subunit protein bL17 from Exiguobacterium sp. (strain ATCC BAA-1283 / AT1b).